Reading from the N-terminus, the 638-residue chain is Chaperone protein DnaK (638 aa).

At T197 the chain carries Phosphothreonine; by autocatalysis. The tract at residues 600–638 is disordered; sequence SGAQGGAQAGPGAGAGQQANQGSSNNKEDIQDADFEEVK. The segment covering 602 to 614 has biased composition (gly residues); sequence AQGGAQAGPGAGA. Positions 615–624 are enriched in low complexity; that stretch reads GQQANQGSSN. The segment covering 625-638 has biased composition (basic and acidic residues); the sequence is NKEDIQDADFEEVK.

Belongs to the heat shock protein 70 family.

Its function is as follows. Acts as a chaperone. This chain is Chaperone protein DnaK, found in Phocaeicola vulgatus (strain ATCC 8482 / DSM 1447 / JCM 5826 / CCUG 4940 / NBRC 14291 / NCTC 11154) (Bacteroides vulgatus).